The primary structure comprises 486 residues: ATP synthase subunit beta (486 aa).

Residue 164-171 participates in ATP binding; it reads GGAGVGKT.

The protein belongs to the ATPase alpha/beta chains family. F-type ATPases have 2 components, CF(1) - the catalytic core - and CF(0) - the membrane proton channel. CF(1) has five subunits: alpha(3), beta(3), gamma(1), delta(1), epsilon(1). CF(0) has four main subunits: a(1), b(1), b'(1) and c(9-12).

It is found in the cellular thylakoid membrane. It catalyses the reaction ATP + H2O + 4 H(+)(in) = ADP + phosphate + 5 H(+)(out). Its function is as follows. Produces ATP from ADP in the presence of a proton gradient across the membrane. The catalytic sites are hosted primarily by the beta subunits. This is ATP synthase subunit beta from Prochlorococcus marinus subsp. pastoris (strain CCMP1986 / NIES-2087 / MED4).